A 204-amino-acid chain; its full sequence is Glycerol-3-phosphate acyltransferase (204 aa).

Helical transmembrane passes span 8–28 (ILIFAYLLGSINSAIIVCYIF), 53–73 (VPAAITLIFDILKGLVPVVIA), 81–101 (FITACTALYAILGHIFPIFFG), 116–136 (FGFSWILGLIFVITWLCVAII), and 155–175 (VIFTSDLQVAAPFLIIAIIIL).

The protein belongs to the PlsY family. Probably interacts with PlsX.

The protein resides in the cell inner membrane. It carries out the reaction an acyl phosphate + sn-glycerol 3-phosphate = a 1-acyl-sn-glycero-3-phosphate + phosphate. It participates in lipid metabolism; phospholipid metabolism. Functionally, catalyzes the transfer of an acyl group from acyl-phosphate (acyl-PO(4)) to glycerol-3-phosphate (G3P) to form lysophosphatidic acid (LPA). This enzyme utilizes acyl-phosphate as fatty acyl donor, but not acyl-CoA or acyl-ACP. This chain is Glycerol-3-phosphate acyltransferase, found in Francisella tularensis subsp. novicida (strain U112).